The chain runs to 349 residues: Isopentenyl-diphosphate delta-isomerase (349 aa).

Substrate is bound at residue 6 to 7 (RK). FMN-binding positions include 62–64 (AMT), serine 93, and asparagine 122. Glutamine 152 contributes to the substrate binding site. Glutamate 153 contributes to the Mg(2+) binding site. Residues lysine 184, threonine 214, 258 to 259 (GG), and 280 to 281 (AG) contribute to the FMN site.

This sequence belongs to the IPP isomerase type 2 family. As to quaternary structure, homooctamer. Dimer of tetramers. FMN is required as a cofactor. Requires NADPH as cofactor. It depends on Mg(2+) as a cofactor.

Its subcellular location is the cytoplasm. It carries out the reaction isopentenyl diphosphate = dimethylallyl diphosphate. Its function is as follows. Involved in the biosynthesis of isoprenoids. Catalyzes the 1,3-allylic rearrangement of the homoallylic substrate isopentenyl (IPP) to its allylic isomer, dimethylallyl diphosphate (DMAPP). This is Isopentenyl-diphosphate delta-isomerase from Bacillus cytotoxicus (strain DSM 22905 / CIP 110041 / 391-98 / NVH 391-98).